The following is a 406-amino-acid chain: COP9 signalosome complex subunit 4 (406 aa).

Position 2 is an N-acetylalanine (A2). K25 carries the N6-acetyllysine modification. Residues 197-366 (YRRKFIEAAQ…GIVHFETREA (170 aa)) form the PCI domain.

The protein belongs to the CSN4 family. Component of the CSN complex, composed of COPS1/GPS1, COPS2, COPS3, COPS4, COPS5, COPS6, COPS7 (COPS7A or COPS7B), COPS8 and COPS9. In the complex, it probably interacts directly with COPS1, COPS2, COPS3, COPS5, COPS6, COPS7 (COPS7A or COPS7B) and COPS8. Interacts with TOR1A; the interaction is direct and associates TOR1A and SNAPIN with the CSN complex. Interacts with STON2; controls STON2 neddylation levels. Interacts with ERCC6.

The protein resides in the cytoplasm. The protein localises to the nucleus. It localises to the cytoplasmic vesicle. Its subcellular location is the secretory vesicle. It is found in the synaptic vesicle. Its function is as follows. Component of the COP9 signalosome complex (CSN), a complex involved in various cellular and developmental processes. The CSN complex is an essential regulator of the ubiquitin (Ubl) conjugation pathway by mediating the deneddylation of the cullin subunits of SCF-type E3 ligase complexes, leading to decrease the Ubl ligase activity of SCF-type complexes such as SCF, CSA or DDB2. Also involved in the deneddylation of non-cullin subunits such as STON2. The complex is also involved in phosphorylation of p53/TP53, c-jun/JUN, IkappaBalpha/NFKBIA, ITPK1, IRF8/ICSBP and SNAPIN, possibly via its association with CK2 and PKD kinases. CSN-dependent phosphorylation of TP53 and JUN promotes and protects degradation by the Ubl system, respectively. The sequence is that of COP9 signalosome complex subunit 4 (Cops4) from Mus musculus (Mouse).